The following is a 255-amino-acid chain: Syntaxin-6 (255 aa).

N-acetylserine is present on Ser2. A Phosphoserine modification is found at Ser2. The segment at 2–168 (SMEDPFFVVK…QAQQQLIVEQ (167 aa)) is required for interaction with VPS51. Over 2-234 (SMEDPFFVVK…VSHMTSDRRQ (233 aa)) the chain is Cytoplasmic. The stretch at 41–74 (EEIDWTTNELRNNLRSIEWDLEDLDETISIVEAN) forms a coiled coil. 2 positions are modified to phosphoserine: Ser129 and Ser152. A t-SNARE coiled-coil homology domain is found at 163–225 (QLIVEQQDEQ…DNVMKKLAKV (63 aa)). Residues 235 to 255 (WCAIAILFAVLLVVLILFLVL) form a helical; Anchor for type IV membrane protein membrane-spanning segment.

It belongs to the syntaxin family. In terms of assembly, identified in a complex containing STX6, STX12, VAMP4 and VTI1A. Binds EEA1. Interacts with VPS45A. Interacts with MARCHF2; the interaction promotes MARCHF2-mediated ubiquitination and degradation of CFTR. Interacts with MARCHF3. Interacts with GOPC. Interacts with BLTP3B (via C-terminal coiled-coil domain). Interacts with BAIAP3; this interaction is increased in the presence of calcium. Interacts with VPS13B.

The protein resides in the golgi apparatus membrane. Its subcellular location is the golgi apparatus. The protein localises to the trans-Golgi network membrane. It is found in the recycling endosome membrane. Its function is as follows. SNARE promoting movement of transport vesicles to target membranes. Targets endosomes to the trans-Golgi network, and may therefore function in retrograde trafficking. Together with SNARE STX12, promotes movement of vesicles from endosomes to the cell membrane, and may therefore function in the endocytic recycling pathway. This is Syntaxin-6 (STX6) from Homo sapiens (Human).